The sequence spans 199 residues: Glycerol-3-phosphate acyltransferase (199 aa).

4 helical membrane passes run 2 to 22 (LEVL…GILV), 77 to 97 (PWVL…PVFL), 113 to 133 (IALA…VALA), and 139 to 159 (LAAM…GQPL).

The protein belongs to the PlsY family. As to quaternary structure, probably interacts with PlsX.

It localises to the cell membrane. It carries out the reaction an acyl phosphate + sn-glycerol 3-phosphate = a 1-acyl-sn-glycero-3-phosphate + phosphate. It functions in the pathway lipid metabolism; phospholipid metabolism. Its function is as follows. Catalyzes the transfer of an acyl group from acyl-phosphate (acyl-PO(4)) to glycerol-3-phosphate (G3P) to form lysophosphatidic acid (LPA). This enzyme utilizes acyl-phosphate as fatty acyl donor, but not acyl-CoA or acyl-ACP. This Rubrobacter xylanophilus (strain DSM 9941 / JCM 11954 / NBRC 16129 / PRD-1) protein is Glycerol-3-phosphate acyltransferase.